The chain runs to 185 residues: Prenylated Rab acceptor protein 1 (185 aa).

Residues 1 to 78 (MAAQKDQQKD…RNVEYYQSNY (78 aa)) lie on the Cytoplasmic side of the membrane. The tract at residues 30-54 (AGREWLERRRATIRPWGSFVDQRRF) is required for interaction with prenylated RAB3A and VAMP2. The next 2 helical transmembrane spans lie at 79–94 (VFVF…VTSP) and 95–112 (MLLV…ILYL). The Cytoplasmic segment spans residues 113–131 (RTLQSKFVLFGREVSPAHQ). Helical transmembrane passes span 132 to 148 (YALA…LAGA) and 149 to 165 (GSAV…VIGS). Residues 165–185 (SHAAFHQIEAVDGEELQMEPV) form a required for interaction with GDI1 region. Over 166–185 (HAAFHQIEAVDGEELQMEPV) the chain is Cytoplasmic. Residues 175–185 (VDGEELQMEPV) are required for interaction with prenylated RAB3A and VAMP2. A homodimerization region spans residues 175 to 185 (VDGEELQMEPV).

This sequence belongs to the PRA1 family. In terms of assembly, homodimer. Interacts with VAMP2 (synaptobrevin-2), prenylated Rab proteins, GDI1, NRDG1 and PCLO.

The protein localises to the cell membrane. It localises to the cytoplasm. Its subcellular location is the golgi apparatus. It is found in the cytoplasmic vesicle. The protein resides in the secretory vesicle. The protein localises to the synaptic vesicle. Functionally, general Rab protein regulator required for vesicle formation from the Golgi complex. May control vesicle docking and fusion by mediating the action of Rab GTPases to the SNARE complexes. In addition it inhibits the removal of Rab GTPases from the membrane by GDI1. This Sus scrofa (Pig) protein is Prenylated Rab acceptor protein 1 (RABAC1).